A 450-amino-acid polypeptide reads, in one-letter code: tRNA modification GTPase MnmE (450 aa).

3 residues coordinate (6S)-5-formyl-5,6,7,8-tetrahydrofolate: R25, E86, and R126. In terms of domain architecture, TrmE-type G spans 221–373; sequence GLRVALVGRP…LVQALLERCG (153 aa). N231 contributes to the K(+) binding site. Residues 231–236, 250–256, 275–278, and 336–339 contribute to the GTP site; these read NVGKSS, TELPGTT, DTAG, and NKAD. S235 is a binding site for Mg(2+). K(+) is bound by residues T250, L252, and T255. T256 contributes to the Mg(2+) binding site. Residue K450 coordinates (6S)-5-formyl-5,6,7,8-tetrahydrofolate.

This sequence belongs to the TRAFAC class TrmE-Era-EngA-EngB-Septin-like GTPase superfamily. TrmE GTPase family. Homodimer. Heterotetramer of two MnmE and two MnmG subunits. The cofactor is K(+).

It localises to the cytoplasm. Exhibits a very high intrinsic GTPase hydrolysis rate. Involved in the addition of a carboxymethylaminomethyl (cmnm) group at the wobble position (U34) of certain tRNAs, forming tRNA-cmnm(5)s(2)U34. The protein is tRNA modification GTPase MnmE of Parasynechococcus marenigrum (strain WH8102).